Consider the following 228-residue polypeptide: Eukaryotic translation initiation factor 4E-1 (228 aa).

2 EIF4G-binding regions span residues 53-56 (HLLE) and 63-99 (FDTP…NNIH). MRNA is bound by residues 71-76 (KQDDWG), Lys-103, and 121-122 (WE). Cysteines 126 and 164 form a disulfide. The EIF4G-binding stretch occupies residues 147 to 156 (YTLLAMIGEQ). Residues 171–176 (RGRAEK) and 216–220 (RKLDR) contribute to the mRNA site.

It belongs to the eukaryotic initiation factor 4E family. As to quaternary structure, EIF4F is a multi-subunit complex, the composition of which varies with external and internal environmental conditions. It is composed of at least EIF4A, EIF4E and EIF4G. EIF4E is also known to interact with other partners. In higher plants two isoforms of EIF4F have been identified, named isoform EIF4F and isoform EIF(iso)4F. Isoform EIF4F has subunits p220 and p26, whereas isoform EIF(iso)4F has subunits p82 and p28. (Microbial infection) Interacts with potyvirus viral genome-linked protein (VPg); this interaction is possible in susceptible hosts but impaired in resistant plants. According to the redox status, the Cys-126-Cys-164 disulfide bridge may have a role in regulating protein function by affecting its ability to bind capped mRNA.

The protein resides in the nucleus. Its subcellular location is the cytoplasm. Its function is as follows. Component of the protein complex eIF4F, which is involved in the recognition of the mRNA cap, ATP-dependent unwinding of 5'-terminal secondary structure and recruitment of mRNA to the ribosome. Recognizes and binds the 7-methylguanosine-containing mRNA cap during an early step in the initiation of protein synthesis and facilitates ribosome binding by inducing the unwinding of the mRNAs secondary structures. Key component of recessive resistance to potyviruses. In terms of biological role, (Microbial infection) Susceptibility host factor required for viral infection by recruiting viral RNAs to the host ribosomal complex via an interaction with viral genome-linked protein (VPg). Also seems to be involved in virus movement from cell-to-cell. The sequence is that of Eukaryotic translation initiation factor 4E-1 from Pisum sativum (Garden pea).